We begin with the raw amino-acid sequence, 1111 residues long: uncharacterized protein (1111 aa).

Residues 1–31 form the signal peptide; it reads MIRKLMKIPPFFTALFASAMFTLSVSQGVLA. The next 11 helical transmembrane spans lie at 490–510, 538–558, 572–592, 620–640, 644–664, 694–714, 797–817, 840–860, 885–905, 922–942, and 1003–1023; these read LPYL…IFKF, LALL…LAVC, FWHW…WISL, IIVV…TDAG, DVLG…IIAP, IPVG…LNLI, FIWT…VTVV, SITL…YVLV, ITTL…FATL, GLGF…ILLF, and LVIS…QLLL.

Belongs to the MscS (TC 1.A.23) family.

It localises to the cell membrane. This is an uncharacterized protein from Haemophilus influenzae (strain ATCC 51907 / DSM 11121 / KW20 / Rd).